A 1144-amino-acid polypeptide reads, in one-letter code: Probable translation initiation factor IF-2 (1144 aa).

Residues phenylalanine 232–isoleucine 362 form the DOD-type homing endonuclease domain. The tr-type G domain occupies threonine 551 to leucine 768. GTP contacts are provided by residues aspartate 624–histidine 628 and asparagine 678–aspartate 681.

This sequence belongs to the TRAFAC class translation factor GTPase superfamily. Classic translation factor GTPase family. IF-2 subfamily. This protein undergoes a protein self splicing that involves a post-translational excision of the intervening region (intein) followed by peptide ligation.

Function in general translation initiation by promoting the binding of the formylmethionine-tRNA to ribosomes. Seems to function along with eIF-2. In Thermococcus kodakarensis (strain ATCC BAA-918 / JCM 12380 / KOD1) (Pyrococcus kodakaraensis (strain KOD1)), this protein is Probable translation initiation factor IF-2 (infB).